A 334-amino-acid polypeptide reads, in one-letter code: Holliday junction branch migration complex subunit RuvB (334 aa).

A large ATPase domain (RuvB-L) region spans residues A4–Y184. Residues I23, R24, G65, K68, T69, T70, E131–Y133, R174, Y184, and R221 each bind ATP. A Mg(2+)-binding site is contributed by T69. Residues Q185 to D255 are small ATPAse domain (RuvB-S). The segment at A258–E334 is head domain (RuvB-H). Residues R294, R313, and R318 each coordinate DNA.

Belongs to the RuvB family. Homohexamer. Forms an RuvA(8)-RuvB(12)-Holliday junction (HJ) complex. HJ DNA is sandwiched between 2 RuvA tetramers; dsDNA enters through RuvA and exits via RuvB. An RuvB hexamer assembles on each DNA strand where it exits the tetramer. Each RuvB hexamer is contacted by two RuvA subunits (via domain III) on 2 adjacent RuvB subunits; this complex drives branch migration. In the full resolvosome a probable DNA-RuvA(4)-RuvB(12)-RuvC(2) complex forms which resolves the HJ.

Its subcellular location is the cytoplasm. It carries out the reaction ATP + H2O = ADP + phosphate + H(+). The RuvA-RuvB-RuvC complex processes Holliday junction (HJ) DNA during genetic recombination and DNA repair, while the RuvA-RuvB complex plays an important role in the rescue of blocked DNA replication forks via replication fork reversal (RFR). RuvA specifically binds to HJ cruciform DNA, conferring on it an open structure. The RuvB hexamer acts as an ATP-dependent pump, pulling dsDNA into and through the RuvAB complex. RuvB forms 2 homohexamers on either side of HJ DNA bound by 1 or 2 RuvA tetramers; 4 subunits per hexamer contact DNA at a time. Coordinated motions by a converter formed by DNA-disengaged RuvB subunits stimulates ATP hydrolysis and nucleotide exchange. Immobilization of the converter enables RuvB to convert the ATP-contained energy into a lever motion, pulling 2 nucleotides of DNA out of the RuvA tetramer per ATP hydrolyzed, thus driving DNA branch migration. The RuvB motors rotate together with the DNA substrate, which together with the progressing nucleotide cycle form the mechanistic basis for DNA recombination by continuous HJ branch migration. Branch migration allows RuvC to scan DNA until it finds its consensus sequence, where it cleaves and resolves cruciform DNA. This chain is Holliday junction branch migration complex subunit RuvB, found in Edwardsiella ictaluri (strain 93-146).